Here is a 272-residue protein sequence, read N- to C-terminus: MISVNKVFYAHSERFQMQNMNVHIKAGEVVSLIGPNGSGKSTLLRLMARLLKQSEGDIVLDGKSIHTMKSADVAKQLAMLPQMHDHQLDLTVKELIEFGRGPHKSWRGRLNKEDEEIVDWALSVTNLEGYEYRLLQSLSGGERQRAWIAMTLAQRTNVLLLDEPTTFLDIVHQLEVMELVKRLNEEFGMTIIMVLHDINQAAQYSDRLLVLKRGKLQYDGVPEEVLCHEMFQHIFGIEVDIFQGSEKPFFTPKRISKKGGAKCEQKNVLPLS.

In terms of domain architecture, ABC transporter spans 2-238 (ISVNKVFYAH…EMFQHIFGIE (237 aa)). 34–41 (GPNGSGKS) serves as a coordination point for ATP.

The protein belongs to the ABC transporter superfamily. As to quaternary structure, the complex is composed of two ATP-binding proteins (FpuC), two transmembrane proteins (FpuB) and a solute-binding protein (FpuA).

The protein resides in the cell membrane. It carries out the reaction a Fe(III)-siderophore(out) + ATP + H2O = a Fe(III)-siderophore(in) + ADP + phosphate + H(+). Part of an ABC transporter complex involved in ferric-petrobactin uptake. Probably responsible for energy coupling to the transport system. The polypeptide is Petrobactin import ATP-binding protein FpuC (Bacillus anthracis).